A 527-amino-acid polypeptide reads, in one-letter code: Oviduct-specific glycoprotein (527 aa).

Residues Met-1–Ala-21 form the signal peptide. Residues His-22–Ala-385 enclose the GH18 domain. A disulfide bond links Cys-26 and Cys-51. An N-linked (GlcNAc...) asparagine glycan is attached at Asn-62. Residues Ala-71–Arg-72, Gly-98–Asn-101, Tyr-142, Leu-211–Asp-214, and Trp-355 contribute to the chitin site. Residues Asn-402 and Asn-441 are each glycosylated (N-linked (GlcNAc...) asparagine). The disordered stretch occupies residues Thr-433–Asp-527.

The protein belongs to the glycosyl hydrolase 18 family. As to expression, oviduct.

It is found in the cytoplasmic vesicle. Its subcellular location is the secretory vesicle. In terms of biological role, binds to oocyte zona pellucida in vivo. May play a role in the fertilization process and/or early embryonic development. In Sus scrofa (Pig), this protein is Oviduct-specific glycoprotein (OVGP1).